Consider the following 518-residue polypeptide: MATSTTGSTLLQPLSNAVRLPVDQVNFVVCQLFALLAAIWFRTYLHSSKTSPFIRHVVATLLGLYLALFCFGWYALHFVIQSGISYYLMIIIGVENMHKYCFVFALGYLTVCQITRVYIFDYGQYSADFSGPMMIITQKITSLAFEIHDGMFRKNEDLTPSQRCLAVRRMPSLLEYLSYNCNFMGILAGPLCSYKDYITFIEGRSYQLQQSEANGKEDTKYEQTDPSPNIAVAQKLLICGLSLLFHMTITKTLPVEYNIDENFRATASWPVRVFYLYLSLMAARPKYYFAWTLADAINNAAGFGFRGYDKNGVTRWDLISNLRIQQIESSTSFKMFLDNWNIQTALWLKRVCYERATFSPTIQTFILSAIWHGVYPGYYLTFLTGVLMTLAARAIRNNIRHYFVESPAVKLCYDIITWMTTQVAISYTVVPFVLLSVKPSFTFYSSCYFCLHIASILVLLVFPLKRTQKGNKQHESIQPVWSKKLEEENLLQKNSYSTTNNSFSQKEEITCRYQALKQ.

Helical transmembrane passes span 21 to 41, 60 to 80, 87 to 107, 183 to 203, 230 to 250, and 267 to 283; these read PVDQVNFVVCQLFALLAAIWF, TLLGLYLALFCFGWYALHFVI, YLMIIIGVENMHKYCFVFALG, FMGILAGPLCSYKDYITFIEG, IAVAQKLLICGLSLLFHMTIT, and ASWPVRVFYLYLSLMAA. Active-site residues include Asn341 and His372. 3 consecutive transmembrane segments (helical) span residues 365–385, 415–435, and 443–463; these read FILSAIWHGVYPGYYLTFLTG, IITWMTTQVAISYTVVPFVLL, and FYSSCYFCLHIASILVLLVFP.

The protein belongs to the membrane-bound acyltransferase family.

It localises to the endoplasmic reticulum membrane. It carries out the reaction a 1-acyl-sn-glycero-3-phosphocholine + an acyl-CoA = a 1,2-diacyl-sn-glycero-3-phosphocholine + CoA. The enzyme catalyses a 1-acyl-sn-glycero-3-phosphoethanolamine + an acyl-CoA = a 1,2-diacyl-sn-glycero-3-phosphoethanolamine + CoA. The catalysed reaction is a 1-acyl-sn-glycero-3-phosphate + an acyl-CoA = a 1,2-diacyl-sn-glycero-3-phosphate + CoA. It catalyses the reaction (9Z)-hexadecenoyl-CoA + 1-hexadecanoyl-sn-glycero-3-phosphocholine = 1-hexadecanoyl-2-(9Z-hexadecenoyl)-sn-glycero-3-phosphocholine + CoA. It carries out the reaction 1-hexadecanoyl-sn-glycero-3-phosphoethanolamine + (9Z)-octadecenoyl-CoA = 1-hexadecanoyl-2-(9Z-octadecenoyl)-sn-glycero-3-phosphoethanolamine + CoA. The enzyme catalyses 1-hexadecanoyl-sn-glycero-3-phosphoethanolamine + (9Z)-hexadecenoyl-CoA = 1-hexadecanoyl-2-(9Z)-hexadecenoyl-sn-glycero-3-phosphoethanolamine + CoA. The catalysed reaction is 1-(9Z-octadecenoyl)-sn-glycero-3-phospho-L-serine + hexadecanoyl-CoA = 1-(9Z)-octadecenoyl-2-hexadecanoyl-sn-glycero-3-phosphoserine + CoA. It catalyses the reaction (9Z,12Z)-octadecadienoyl-CoA + 1-hexadecanoyl-sn-glycero-3-phosphocholine = 1-hexadecanoyl-2-(9Z,12Z-octadecadienoyl)-sn-glycero-3-phosphocholine + CoA. It carries out the reaction 1-hexadecanoyl-sn-glycero-3-phosphocholine + (9Z)-octadecenoyl-CoA = 1-hexadecanoyl-2-(9Z-octadecenoyl)-sn-glycero-3-phosphocholine + CoA. The enzyme catalyses 1-hexadecanoyl-sn-glycero-3-phosphate + (9Z)-hexadecenoyl-CoA = 1-hexadecanoyl-2-[(9Z)-hexadec-9-enoyl]-sn-glycero-3-phosphate + CoA. The catalysed reaction is 1-hexadecanoyl-sn-glycero-3-phosphate + (9Z)-octadecenoyl-CoA = 1-hexadecanoyl-2-(9Z-octadecenoyl)-sn-glycero-3-phosphate + CoA. It catalyses the reaction a 1-O-(1Z-alkenyl)-sn-glycero-3-phosphocholine + (9Z)-octadecenoyl-CoA = 1-O-(1Z)-alkenyl-2-(9Z)-octadecenoyl-sn-glycero-3-phosphocholine + CoA. It carries out the reaction a 1-O-(1Z-alkenyl)-sn-glycero-3-phosphoethanolamine + (9Z)-octadecenoyl-CoA = 1-O-(1Z)-alkenyl-2-(9Z)-octadecenoyl-sn-glycero-3-phosphoethanolamine + CoA. The enzyme catalyses 1-octadecanoyl-sn-glycero-3-phosphoethanolamine + (9Z)-octadecenoyl-CoA = 1-octadecanoyl-2-(9Z-octadecenoyl)-sn-glycero-3-phosphoethanolamine + CoA. The catalysed reaction is 1-octadecanoyl-sn-glycero-3-phosphocholine + (9Z)-octadecenoyl-CoA = 1-octadecanoyl-2-(9Z-octadecenoyl)-sn-glycero-3-phosphocholine + CoA. It catalyses the reaction 1-(9Z-octadecenoyl)-sn-glycero-3-phosphoethanolamine + (9Z)-octadecenoyl-CoA = 1,2-di-(9Z-octadecenoyl)-sn-glycero-3-phosphoethanolamine + CoA. The protein operates within lipid metabolism; phospholipid metabolism. Acyltransferase which catalyzes the transfer of an acyl group from an acyl-CoA to a lysophospholipid leading to the production of a phospholipid and participates in the reacylation step of the phospholipid remodeling pathway also known as the Lands cycle. May catalyze preferentially the acylation of lysophosphatidylethanolamine (1-acyl-sn-glycero-3-phosphoethanolamine or LPE) and lysophosphatidic acid (LPA) and to a lesser extend lysophosphatidylcholine (LPC) and lysophosphatidylserine (LPS). Prefers oleoyl-CoA as the acyl donor. The polypeptide is Membrane-bound glycerophospholipid O-acyltransferase 2 (Gallus gallus (Chicken)).